The following is a 223-amino-acid chain: Ribosomal RNA small subunit methyltransferase G (223 aa).

Positions 85, 90, and 154 each coordinate S-adenosyl-L-methionine.

It belongs to the methyltransferase superfamily. RNA methyltransferase RsmG family.

The protein localises to the cytoplasm. It carries out the reaction guanosine(527) in 16S rRNA + S-adenosyl-L-methionine = N(7)-methylguanosine(527) in 16S rRNA + S-adenosyl-L-homocysteine. Functionally, specifically methylates the N7 position of guanine in position 527 of 16S rRNA. This Rhodopseudomonas palustris (strain ATCC BAA-98 / CGA009) protein is Ribosomal RNA small subunit methyltransferase G.